The sequence spans 258 residues: Maintenance of carboxysome distribution protein A (258 aa).

Gly-11, Gly-12, Gln-13, Gly-14, Lys-15, Thr-16, Thr-17, Gln-40, Glu-147, Lys-151, Phe-182, Arg-183, Leu-216, Glu-217, Ser-218, and Tyr-221 together coordinate ATP. Thr-16 provides a ligand contact to Mg(2+).

Belongs to the ParA family. McdA subfamily. In terms of assembly, homodimerizes in the presence of ATP, making extra nucleotide contacts than with ADP or AMP-PNP. Each subunit binds 1 ATP molecule; Glu-147, Lys-151 and Arg-183 cross the dimer interface to contact ATP in the other subunit, while Phe-182, Arg-183 and Tyr-221 stack with the adenine base in their own subunit. Forms a complex with McdB.

It is found in the cytoplasm. The protein resides in the nucleoid. The enzyme catalyses ATP + H2O = ADP + phosphate + H(+). In terms of biological role, mcdA and McdB together mediate carboxysome (Cb) spacing, size, ultrastructure and probably inheritance in the cell, together they prevent Cb aggregation. McdA is an ATPase that forms dynamic gradients on the nucleoid in response to adapter protein McdB, which associates with carboxysomes. The interplay between McdA gradients on the nucleoid and McdB-bound carboxysomes result in the equal spacing of Cbs along the cell length. Binds DNA saturably and strongly in the presence of Mg(2+)ATP; without ATP, DNA-binding is very poor (tested with a mutant that should not be able to hydrolyze ATP, Asp-38-Ala). Decreasing the NaCl concentration increases DNA binding. Its function is as follows. Incorrect positioning (aggregation) of carboxysomes results in reduced CO(2) fixation by encapsulated ribulose-1,5-bisphosphate carboxylase (RuBisCO, cbbL/cbbS), which leads to slower growth. In Gloeothece citriformis (strain PCC 7424) (Cyanothece sp. (strain PCC 7424)), this protein is Maintenance of carboxysome distribution protein A.